The following is a 633-amino-acid chain: Probable potassium transport system protein Kup 2 (633 aa).

Transmembrane regions (helical) follow at residues 59–79, 110–130, 145–165, 173–193, 219–239, 256–276, 287–307, 345–365, 374–394, 402–422, and 429–449; these read ISAI…ILIM, ILLV…LTPA, TALQ…LFLF, IGAL…AAGI, GFAS…AEAL, FGLV…LIIV, LLYP…ATVI, IYIP…VLGF, AYGV…FFVI, LLLS…FVSS, and EGGW…LTWV.

It belongs to the HAK/KUP transporter (TC 2.A.72) family.

It is found in the cell inner membrane. It catalyses the reaction K(+)(in) + H(+)(in) = K(+)(out) + H(+)(out). Its function is as follows. Transport of potassium into the cell. Likely operates as a K(+):H(+) symporter. This Cupriavidus necator (strain ATCC 17699 / DSM 428 / KCTC 22496 / NCIMB 10442 / H16 / Stanier 337) (Ralstonia eutropha) protein is Probable potassium transport system protein Kup 2.